Consider the following 124-residue polypeptide: Large ribosomal subunit protein bL12 (124 aa).

The protein belongs to the bacterial ribosomal protein bL12 family. In terms of assembly, homodimer. Part of the ribosomal stalk of the 50S ribosomal subunit. Forms a multimeric L10(L12)X complex, where L10 forms an elongated spine to which 2 to 4 L12 dimers bind in a sequential fashion. Binds GTP-bound translation factors.

Its function is as follows. Forms part of the ribosomal stalk which helps the ribosome interact with GTP-bound translation factors. Is thus essential for accurate translation. The sequence is that of Large ribosomal subunit protein bL12 from Burkholderia cenocepacia (strain HI2424).